The chain runs to 247 residues: UPF0280 protein MmarC7_0482 (247 aa).

Belongs to the UPF0280 family.

The chain is UPF0280 protein MmarC7_0482 from Methanococcus maripaludis (strain C7 / ATCC BAA-1331).